A 623-amino-acid polypeptide reads, in one-letter code: MKSIFIIIFILYVFQVNSQTIYPIDPSGKCEQYIGDTPSSPCSKFLNNLDSIYVSSNATQQNAMKKLDEYFGILGAIGTSGCKSDSLTYKTLCSIYLPGCESFTNNQTNITIAIPKRICYNTCNNVTTKCGVPKFYFSCDQIEPVSGLPMFPLNYSEFNLTNYDVGNPNYTVQCYGPLSDNTMVNLDSSYCPPPLFYHNSTDHDADYDRGYLFVSETSNCVVPNPVPLYTNEQWDQLYNLSNTLAVLSTFGSLYLLVTFIILNPKVTSFDRMYGFFNGSVFMMSLSGVILFIAGGPRALIKDGGARISVFEDPLCSSTGFIFQLFAINAILFWAYMGFDLWWRVKYITKPLNIQKYYVPIAFTISFIFSVIPLATKNYRMVRGNIHCWVHKAVLQNTLFFGPLGLTLTISTGFIGLVIYEIYKIVKATGRGGIMKLEIKPILNIVLIYFSFVYIFAFNFHNDNNSKNTYGSIDEFFQCTLESDDPSKCTVGGPSIGSLGYFIYCIRIYGIYCFFLQGLNERAFKIWKRSIVFNNRFILFIKVKLFSMDNNSPSESGNSSTTAGTSTTINNSNINKKNNNSKPTLSTMDSNAFSKNNDSDSDFDDYDPYHKKQNDIEIGSVNIK.

Positions 1-18 are cleaved as a signal peptide; sequence MKSIFIIIFILYVFQVNS. Over 19–243 the chain is Extracellular; it reads QTIYPIDPSG…WDQLYNLSNT (225 aa). The 139-residue stretch at 25–163 folds into the FZ domain; that stretch reads DPSGKCEQYI…NYSEFNLTNY (139 aa). 2 disulfide bridges follow: Cys-30-Cys-100 and Cys-42-Cys-93. N-linked (GlcNAc...) asparagine glycans are attached at residues Asn-57, Asn-106, Asn-109, Asn-154, Asn-159, Asn-169, Asn-199, and Asn-239. Residues 244-264 traverse the membrane as a helical segment; sequence LAVLSTFGSLYLLVTFIILNP. Topologically, residues 265-273 are cytoplasmic; the sequence is KVTSFDRMY. The chain crosses the membrane as a helical span at residues 274–294; the sequence is GFFNGSVFMMSLSGVILFIAG. Topologically, residues 295 to 317 are extracellular; sequence GPRALIKDGGARISVFEDPLCSS. The chain crosses the membrane as a helical span at residues 318 to 338; it reads TGFIFQLFAINAILFWAYMGF. The Cytoplasmic portion of the chain corresponds to 339 to 354; it reads DLWWRVKYITKPLNIQ. A helical transmembrane segment spans residues 355 to 375; it reads KYYVPIAFTISFIFSVIPLAT. At 376–397 the chain is on the extracellular side; it reads KNYRMVRGNIHCWVHKAVLQNT. The helical transmembrane segment at 398 to 418 threads the bilayer; it reads LFFGPLGLTLTISTGFIGLVI. At 419 to 439 the chain is on the cytoplasmic side; sequence YEIYKIVKATGRGGIMKLEIK. The chain crosses the membrane as a helical span at residues 440 to 460; it reads PILNIVLIYFSFVYIFAFNFH. The Extracellular segment spans residues 461-494; the sequence is NDNNSKNTYGSIDEFFQCTLESDDPSKCTVGGPS. Residue Asn-463 is glycosylated (N-linked (GlcNAc...) asparagine). A helical transmembrane segment spans residues 495–515; that stretch reads IGSLGYFIYCIRIYGIYCFFL. Residues 516–623 are Cytoplasmic-facing; sequence QGLNERAFKI…DIEIGSVNIK (108 aa). Residues 552 to 590 form a disordered region; it reads PSESGNSSTTAGTSTTINNSNINKKNNNSKPTLSTMDSN. The span at 555–580 shows a compositional bias: low complexity; that stretch reads SGNSSTTAGTSTTINNSNINKKNNNS.

It belongs to the G-protein coupled receptor Fz/Smo family.

It is found in the membrane. This Dictyostelium discoideum (Social amoeba) protein is Frizzled and smoothened-like protein M (fslM-1).